A 282-amino-acid chain; its full sequence is Glutamyl endopeptidase (282 aa).

A signal peptide spans 1-27; sequence MKKRFLSICTMTIAALATTTMVNTSYA. Residues 28-66 constitute a propeptide that is removed on maturation; that stretch reads KTDTESHNHSSLGTENKNVLDINSSSHNIKPSQNKSYPS. Active-site charge relay system residues include histidine 117, aspartate 159, and serine 235.

This sequence belongs to the peptidase S1B family. Monomer.

The protein resides in the secreted. It catalyses the reaction Preferential cleavage: Glu-|-Xaa, Asp-|-Xaa.. Inhibited by diisopropyl fluorophosphate. Its function is as follows. Exhibits a significant hydrolytic activity for the carbonyl side of glutamic acid. Shows activity toward human fibronectin and type 1 collagen. The chain is Glutamyl endopeptidase (gseA) from Staphylococcus epidermidis.